We begin with the raw amino-acid sequence, 219 residues long: Probable nicotinate-nucleotide adenylyltransferase (219 aa).

The protein belongs to the NadD family.

The enzyme catalyses nicotinate beta-D-ribonucleotide + ATP + H(+) = deamido-NAD(+) + diphosphate. The protein operates within cofactor biosynthesis; NAD(+) biosynthesis; deamido-NAD(+) from nicotinate D-ribonucleotide: step 1/1. Catalyzes the reversible adenylation of nicotinate mononucleotide (NaMN) to nicotinic acid adenine dinucleotide (NaAD). This is Probable nicotinate-nucleotide adenylyltransferase from Cronobacter sakazakii (strain ATCC BAA-894) (Enterobacter sakazakii).